We begin with the raw amino-acid sequence, 307 residues long: Acyl transferase (307 aa).

Catalysis depends on charge relay system residues Ser116, Asp213, and His243.

It belongs to the LuxD family.

It participates in lipid metabolism; fatty acid reduction for biolumincescence. Its function is as follows. Acyl transferase is part of the fatty acid reductase system required for aldehyde biosynthesis; it produces fatty acids for the luminescent reaction. The polypeptide is Acyl transferase (Photorhabdus luminescens (Xenorhabdus luminescens)).